The chain runs to 265 residues: 4-hydroxy-tetrahydrodipicolinate reductase (265 aa).

9–14 (GPRGRM) is a binding site for NAD(+). Arg37 serves as a coordination point for NADP(+). NAD(+) is bound by residues 98–100 (GTT) and 124–127 (APNF). Residue His154 is the Proton donor/acceptor of the active site. A (S)-2,3,4,5-tetrahydrodipicolinate-binding site is contributed by His155. The active-site Proton donor is Lys158. 164–165 (GT) provides a ligand contact to (S)-2,3,4,5-tetrahydrodipicolinate.

This sequence belongs to the DapB family.

It localises to the cytoplasm. The enzyme catalyses (S)-2,3,4,5-tetrahydrodipicolinate + NAD(+) + H2O = (2S,4S)-4-hydroxy-2,3,4,5-tetrahydrodipicolinate + NADH + H(+). The catalysed reaction is (S)-2,3,4,5-tetrahydrodipicolinate + NADP(+) + H2O = (2S,4S)-4-hydroxy-2,3,4,5-tetrahydrodipicolinate + NADPH + H(+). It functions in the pathway amino-acid biosynthesis; L-lysine biosynthesis via DAP pathway; (S)-tetrahydrodipicolinate from L-aspartate: step 4/4. Functionally, catalyzes the conversion of 4-hydroxy-tetrahydrodipicolinate (HTPA) to tetrahydrodipicolinate. The protein is 4-hydroxy-tetrahydrodipicolinate reductase of Geobacillus thermodenitrificans (strain NG80-2).